Reading from the N-terminus, the 356-residue chain is Protein RecA (356 aa).

An ATP-binding site is contributed by Gly68–Thr75.

The protein belongs to the RecA family.

Its subcellular location is the cytoplasm. In terms of biological role, can catalyze the hydrolysis of ATP in the presence of single-stranded DNA, the ATP-dependent uptake of single-stranded DNA by duplex DNA, and the ATP-dependent hybridization of homologous single-stranded DNAs. It interacts with LexA causing its activation and leading to its autocatalytic cleavage. The protein is Protein RecA of Thermotoga maritima (strain ATCC 43589 / DSM 3109 / JCM 10099 / NBRC 100826 / MSB8).